Here is a 181-residue protein sequence, read N- to C-terminus: MFPRRLLPASLIVLGVLFGASAQASPAHGQAFGKPAQAAQASRSIEVVLGDMYFKPRAIEVKAGETVRFVLKNEGKLLHEFNLGDAAMHAEHQKEMLEMQQSGMLTPTGMASMDHSQMGHGMADMDHGRMMKHDDPNSVLVEPGKSAELTWTFTKATRLEFACNIPGHYQAGMVGQLTVQP.

The N-terminal stretch at 1–24 (MFPRRLLPASLIVLGVLFGASAQA) is a signal peptide. Cu(2+)-binding residues include His79, Cys163, His168, and Met173.

This sequence belongs to the CopI family.

The protein resides in the periplasm. Functionally, involved in copper tolerance. The polypeptide is Copper-resistant cuproprotein CopI (Pseudomonas aeruginosa (strain ATCC 15692 / DSM 22644 / CIP 104116 / JCM 14847 / LMG 12228 / 1C / PRS 101 / PAO1)).